Reading from the N-terminus, the 425-residue chain is Serine--tRNA ligase (425 aa).

233–235 (TAE) is a binding site for L-serine. Position 264–266 (264–266 (RRE)) interacts with ATP. Residue Glu-287 coordinates L-serine. ATP is bound at residue 351–354 (EISS). Residue Ser-385 participates in L-serine binding.

This sequence belongs to the class-II aminoacyl-tRNA synthetase family. Type-1 seryl-tRNA synthetase subfamily. In terms of assembly, homodimer. The tRNA molecule binds across the dimer.

It is found in the cytoplasm. It carries out the reaction tRNA(Ser) + L-serine + ATP = L-seryl-tRNA(Ser) + AMP + diphosphate + H(+). The enzyme catalyses tRNA(Sec) + L-serine + ATP = L-seryl-tRNA(Sec) + AMP + diphosphate + H(+). Its pathway is aminoacyl-tRNA biosynthesis; selenocysteinyl-tRNA(Sec) biosynthesis; L-seryl-tRNA(Sec) from L-serine and tRNA(Sec): step 1/1. Its function is as follows. Catalyzes the attachment of serine to tRNA(Ser). Is also able to aminoacylate tRNA(Sec) with serine, to form the misacylated tRNA L-seryl-tRNA(Sec), which will be further converted into selenocysteinyl-tRNA(Sec). The protein is Serine--tRNA ligase of Prochlorococcus marinus (strain MIT 9515).